The following is a 317-amino-acid chain: Cytochrome f (317 aa).

An N-terminal signal peptide occupies residues 1–34; that stretch reads MKGLKNQIMKKTSLFICTLLFISSIVFHPKITFA. Heme contacts are provided by Y35, C55, C58, and H59. Residues 284 to 304 form a helical membrane-spanning segment; sequence VIGLIAFFIGVGLTQILLVLK.

Belongs to the cytochrome f family. The 4 large subunits of the cytochrome b6-f complex are cytochrome b6, subunit IV (17 kDa polypeptide, PetD), cytochrome f and the Rieske protein, while the 4 small subunits are PetG, PetL, PetM and PetN. The complex functions as a dimer. The cofactor is heme.

Its subcellular location is the cellular thylakoid membrane. Functionally, component of the cytochrome b6-f complex, which mediates electron transfer between photosystem II (PSII) and photosystem I (PSI), cyclic electron flow around PSI, and state transitions. This is Cytochrome f from Prochlorococcus marinus (strain MIT 9301).